A 677-amino-acid chain; its full sequence is Protein asunder (677 aa).

The stretch at 515 to 540 (RLKLSKAKDQYRLLYRELEQLIQLNS) forms a coiled coil. Low complexity predominate over residues 578–598 (ESPLSPERLEPTSSSSSNSLL). Residues 578–604 (ESPLSPERLEPTSSSSSNSLLKARKRR) are disordered. The Nuclear localization signal (NLS) motif lies at 598-604 (LKARKRR).

Belongs to the Integrator subunit 13 family. As to quaternary structure, belongs to the multiprotein complex Integrator, at least composed of IntS1, IntS2, IntS3, IntS4, omd/IntS5, IntS6, defl/IntS7, IntS8, IntS9, IntS10, IntS11, IntS12, asun/IntS13, IntS14 and IntS15. The core complex associates with protein phosphatase 2A subunits mts/PP2A and Pp2A-29B, to form the Integrator-PP2A (INTAC) complex. Post-translationally, phosphorylated.

Its subcellular location is the nucleus. The protein resides in the cytoplasm. The protein localises to the perinuclear region. Component of the integrator complex, a multiprotein complex that terminates RNA polymerase II (Pol II) transcription in the promoter-proximal region of genes. The integrator complex provides a quality checkpoint during transcription elongation by driving premature transcription termination of transcripts that are unfavorably configured for transcriptional elongation: the complex terminates transcription by (1) catalyzing dephosphorylation of the C-terminal domain (CTD) of Pol II subunit Polr2A/Rbp1 and Spt5, and (2) degrading the exiting nascent RNA transcript via endonuclease activity. The integrator complex is also involved in the 3'-end processing of the U7 snRNA, and also the spliceosomal snRNAs U1, U2, U4 and U5. The sequence is that of Protein asunder (asun) from Drosophila willistoni (Fruit fly).